Consider the following 132-residue polypeptide: Small ribosomal subunit protein uS9 (132 aa).

This sequence belongs to the universal ribosomal protein uS9 family.

In Mycoplasma genitalium (strain ATCC 33530 / DSM 19775 / NCTC 10195 / G37) (Mycoplasmoides genitalium), this protein is Small ribosomal subunit protein uS9 (rpsI).